Here is a 158-residue protein sequence, read N- to C-terminus: Transcription elongation factor GreA (158 aa).

Positions 10–75 (TKEGKEKLEQ…QMLENMIRNA (66 aa)) form a coiled coil.

The protein belongs to the GreA/GreB family.

In terms of biological role, necessary for efficient RNA polymerase transcription elongation past template-encoded arresting sites. The arresting sites in DNA have the property of trapping a certain fraction of elongating RNA polymerases that pass through, resulting in locked ternary complexes. Cleavage of the nascent transcript by cleavage factors such as GreA or GreB allows the resumption of elongation from the new 3'terminus. GreA releases sequences of 2 to 3 nucleotides. The chain is Transcription elongation factor GreA from Geobacillus kaustophilus (strain HTA426).